A 177-amino-acid polypeptide reads, in one-letter code: 18.9 kDa heat shock protein (177 aa).

Residues 1-35 form a disordered region; that stretch reads MSMITSMLGRKQNAQQKGGGGGGRTGGGGGGEIEP. The span at 17-32 shows a compositional bias: gly residues; it reads KGGGGGGRTGGGGGGE. The 115-residue stretch at 63 to 177 folds into the sHSP domain; sequence AAGVPSTASM…PHARIIPITN (115 aa).

This sequence belongs to the small heat shock protein (HSP20) family. In terms of assembly, may form oligomeric structures.

The protein localises to the cytoplasm. The sequence is that of 18.9 kDa heat shock protein (HSP18.9) from Oryza sativa subsp. japonica (Rice).